Reading from the N-terminus, the 518-residue chain is Xaa-Pro aminopeptidase 3 (518 aa).

Residues 1 to 48 (MNNICKLNKFIISKSSSSLSSTSSKIKTNCLIKNAKMFSSSLNLNRFY) constitute a mitochondrion transit peptide. Substrate-binding residues include Tyr-314, Asp-345, Asp-356, His-434, His-441, Glu-461, and Glu-485. Residues Asp-345, Asp-356, and His-434 each contribute to the Mn(2+) site. The Mn(2+) site is built by Glu-461 and Glu-485.

The protein belongs to the peptidase M24B family. Homodimer. The cofactor is Mn(2+).

It is found in the mitochondrion. Its subcellular location is the cytoplasm. It catalyses the reaction Release of any N-terminal amino acid, including proline, that is linked to proline, even from a dipeptide or tripeptide.. In terms of biological role, catalyzes the removal of a penultimate prolyl residue from the N-termini of peptides, such as Leu-Pro-Ala. Also shows low activity towards peptides with Ala or Ser at the P1 position. In Dictyostelium discoideum (Social amoeba), this protein is Xaa-Pro aminopeptidase 3 (xpnpep3).